The chain runs to 83 residues: Large ribosomal subunit protein eL43 (83 aa).

Residues cysteine 38, cysteine 41, cysteine 56, and cysteine 59 each contribute to the Zn(2+) site. A C4-type zinc finger spans residues 38–59 (CPVCGRRAVRRISTGIWQCKKC).

This sequence belongs to the eukaryotic ribosomal protein eL43 family. Putative zinc-binding subfamily. Part of the 50S ribosomal subunit. Requires Zn(2+) as cofactor.

Binds to the 23S rRNA. The chain is Large ribosomal subunit protein eL43 from Pyrococcus abyssi (strain GE5 / Orsay).